The sequence spans 347 residues: Haptoglobin (347 aa).

The first 18 residues, 1–18 (MRALGAVVTLLLWGQLFA), serve as a signal peptide directing secretion. Residues 31–88 (DSCPKPPEIANGYVEHLVRYRCRQFYKLQTEGDGIYTLNSEKQWVNPAAGDKLPKCEA) form the Sushi domain. Cystine bridges form between cysteine 52–cysteine 86, cysteine 90–cysteine 207, cysteine 250–cysteine 281, and cysteine 292–cysteine 322. The Peptidase S1 domain maps to 103 to 345 (IIGGSMDAKG…LKDWVQETMA (243 aa)). 2 N-linked (GlcNAc...) asparagine glycosylation sites follow: asparagine 148 and asparagine 152. The tract at residues 259-264 (VPEKKG) is interaction with CD163.

This sequence belongs to the peptidase S1 family. As to quaternary structure, tetramer of two alpha and two beta chains; disulfide-linked. The hemoglobin/haptoglobin complex is composed of a haptoglobin dimer bound to two hemoglobin alpha-beta dimers. Interacts with CD163. Interacts with ERGIC3. Expressed by the liver and secreted in plasma.

Its subcellular location is the secreted. Functionally, as a result of hemolysis, hemoglobin is found to accumulate in the kidney and is secreted in the urine. Haptoglobin captures, and combines with free plasma hemoglobin to allow hepatic recycling of heme iron and to prevent kidney damage. Haptoglobin also acts as an antioxidant, has antibacterial activity and plays a role in modulating many aspects of the acute phase response. Hemoglobin/haptoglobin complexes are rapidly cleared by the macrophage CD163 scavenger receptor expressed on the surface of liver Kupfer cells through an endocytic lysosomal degradation pathway. The sequence is that of Haptoglobin (Hp) from Rattus norvegicus (Rat).